The following is an 828-amino-acid chain: Protein ELFN1 (828 aa).

The signal sequence occupies residues 1-25 (MAGHGWGTAWVLVAAATLLHAGGLA). At 26-418 (QGDCWLIEGD…VPSPSTATHY (393 aa)) the chain is on the extracellular side. 5 LRR repeats span residues 61–82 (TIVD…SLSR), 85–106 (NLTY…AFSG), 109–130 (NLQV…MLRG), 133–154 (KLEY…AFWE), and 157–178 (NIVN…TFAG). N-linked (GlcNAc...) asparagine glycans are attached at residues asparagine 85, asparagine 90, and asparagine 122. The 64-residue stretch at 190-253 (NPFYCSCELL…LSKLQSVCTE (64 aa)) folds into the LRRCT domain. Asparagine 210 is a glycosylation site (N-linked (GlcNAc...) asparagine). Residues 258–293 (AEVLGPPRPVPGRSQPGHSPPPPPPEPSDMPCADDE) are disordered. A compositionally biased stretch (pro residues) spans 275–285 (HSPPPPPPEPS). A Fibronectin type-III domain is found at 312-399 (QTEARPSMKV…HNHTCLTICL (88 aa)). The N-linked (GlcNAc...) asparagine glycan is linked to asparagine 376. Residues 419–439 (IMTILGCLFGMVLVLGAVYYC) form a helical membrane-spanning segment. Residues 440–828 (LRKRRRQEEK…WKGVSAQHKS (389 aa)) lie on the Cytoplasmic side of the membrane. Serine 460 and serine 646 each carry phosphoserine. 2 disordered regions span residues 627-674 (HHSV…IEKS) and 697-731 (KSRQ…GLGG). Over residues 638–652 (RASTSSSGSARSPRT) the composition is skewed to low complexity. The segment covering 697–706 (KSRQYGEHRH) has biased composition (basic and acidic residues). Residues 714 to 725 (AEPPAPPPPPPT) are compositionally biased toward pro residues.

In terms of assembly, interacts with PPP1CA. As to expression, selectively expressed in perialvear somatostatin (Sst)-containing interneurons.

The protein localises to the membrane. The protein resides in the cell projection. It is found in the dendrite. Functionally, postsynaptic protein that regulates circuit dynamics in the central nervous system by modulating the temporal dynamics of interneuron recruitment. Specifically present in excitatory synapses onto oriens-lacunosum molecular (OLM) interneurons and acts as a regulator of presynaptic release probability to direct the formation of highly facilitating pyramidal-OLM synapses. Inhibits phosphatase activity of protein phosphatase 1 (PP1) complexes. This chain is Protein ELFN1 (Elfn1), found in Mus musculus (Mouse).